Consider the following 108-residue polypeptide: Circadian clock oscillator protein KaiB (108 aa).

The protein belongs to the KaiB family. As to quaternary structure, may undergo a major conformational rearrangment; in the free state forms homooligomers. When bound to KaiC switches to a monomeric thioredoxin-fold (KaiB(fs)). The active oscillator complex is probably KaiC(6):KaiB(6).

Its function is as follows. Component of the KaiBC clock protein complex, which constitutes the main circadian regulator in cyanobacteria; it may modify the ATPase activity of KaiC. Functionally, may be a metamorphic protein which reversibly switches between an inactive tetrameric fold and a rare, thioredoxin-like monomeric fold (KaiB(fs)). KaiB(fs) binds phospho-KaiC, and perhaps clock output effectors. The sequence is that of Circadian clock oscillator protein KaiB from Prochlorococcus marinus (strain MIT 9515).